The following is a 555-amino-acid chain: Solute carrier family 2, facilitated glucose transporter member 10 (555 aa).

Residues 1 to 15 are Cytoplasmic-facing; the sequence is MGLSSPTLILAATVS. The chain crosses the membrane as a helical span at residues 16 to 36; it reads LLGGIVFGYELGIISGALLVL. Residues 37-48 are Extracellular-facing; that stretch reads KTVYQLTCFEQE. Residues 49–69 traverse the membrane as a helical segment; that stretch reads ALVSAVLFGALLASLIGGIII. The Cytoplasmic portion of the chain corresponds to 70-82; sequence DRWGRRTAILASN. Residues 83–103 form a helical membrane-spanning segment; it reads LVVLAGSIILIATSTFWWLIV. Topologically, residues 104-105 are extracellular; it reads GR. A helical membrane pass occupies residues 106 to 126; that stretch reads VTIGFAISISSMACCIYVSEI. Over 127–132 the chain is Cytoplasmic; sequence VRPHQR. The chain crosses the membrane as a helical span at residues 133–153; it reads GMLVSLYETGITVGILISYAM. Residues 154 to 165 are Extracellular-facing; that stretch reads NYFLSGVNESWK. Asn161 carries an N-linked (GlcNAc...) asparagine glycan. The helical transmembrane segment at 166–186 threads the bilayer; it reads YMFGLAIVPAAFQFISILFLP. At 187–240 the chain is on the cytoplasmic side; the sequence is SKPHKLNFWEQDTDDGFIELEETGEAGEFKPDTYDRQYTFLDLFRSKDNMRTRT. The chain crosses the membrane as a helical span at residues 241-261; sequence LLGLGLVLFQQFTGQPNVLYY. 250–251 is a binding site for D-glucose; sequence QQ. Over 262–277 the chain is Extracellular; it reads ASTIFQSVGFQSNSSA. Asn274 is a glycosylation site (N-linked (GlcNAc...) asparagine). Residues 278–298 form a helical membrane-spanning segment; that stretch reads VLASVGLGVVKVASTLIAICF. The Cytoplasmic portion of the chain corresponds to 299-305; it reads ADKAGRR. A helical transmembrane segment spans residues 306–326; sequence ILLLAGCIVMTIAITGIGIVS. The Extracellular segment spans residues 327–415; that stretch reads FTVKMDSHRD…ASPELPSNYT (89 aa). Asn344, Asn351, Asn400, and Asn413 each carry an N-linked (GlcNAc...) asparagine glycan. A helical membrane pass occupies residues 416 to 436; sequence ILNWITLLSMMAFVSAFSIGF. Topologically, residues 437-464 are cytoplasmic; it reads GPMTWIVLSEIYPADIRGRAFAFCNSFN. Trp441 is a D-glucose binding site. Residues 465–483 traverse the membrane as a helical segment; it reads WAANLLITLTFLDVIASIG. Residues 484-485 lie on the Extracellular side of the membrane; the sequence is LS. A helical membrane pass occupies residues 486 to 506; the sequence is WTFLLYGVVGLLAIAFIYFFI. The Cytoplasmic segment spans residues 507-555; that stretch reads PETKGQSLEEIDKQFSTKRILQKRETSKGVGKRPSSGPPYQRIGKASPS. Residues 528–555 are disordered; it reads QKRETSKGVGKRPSSGPPYQRIGKASPS.

Belongs to the major facilitator superfamily. Sugar transporter (TC 2.A.1.1) family. Glucose transporter subfamily.

The protein resides in the endomembrane system. Its subcellular location is the cytoplasm. It localises to the perinuclear region. The catalysed reaction is D-glucose(out) = D-glucose(in). Functionally, facilitative glucose transporter required for the development of the cardiovascular system. The sequence is that of Solute carrier family 2, facilitated glucose transporter member 10 from Xenopus tropicalis (Western clawed frog).